A 174-amino-acid chain; its full sequence is uncharacterized protein (174 aa).

Residues 126–146 (AIDEFIITVIPVVLGSGIPLF) traverse the membrane as a helical segment.

To B.subtilis YyaP.

The protein localises to the membrane. This is an uncharacterized protein from Bacillus subtilis (strain 168).